The following is a 643-amino-acid chain: Complement component C1q receptor (643 aa).

The first 23 residues, 1-23 (MVTSTGLLLLLGLLGQLWAGAAA), serve as a signal peptide directing secretion. The Extracellular portion of the chain corresponds to 24 to 571 (DSEAVVCEGT…HSDSDTDGQK (548 aa)). The 143-residue stretch at 31-173 (EGTACYTAHW…CGTPDAPGNS (143 aa)) folds into the C-type lectin domain. Cystine bridges form between Cys140-Cys164, Cys261-Cys272, Cys268-Cys282, Cys284-Cys297, Cys303-Cys314, Cys308-Cys325, Cys327-Cys340, Cys346-Cys355, Cys351-Cys364, Cys366-Cys380, Cys386-Cys397, Cys393-Cys406, Cys408-Cys422, Cys428-Cys437, Cys433-Cys446, and Cys448-Cys461. 2 consecutive EGF-like domains span residues 257-298 (PKFG…VTCA) and 299-341 (SRNP…VHCV). Asn322 carries N-linked (GlcNAc...) asparagine glycosylation. The EGF-like 3; calcium-binding domain maps to 342 to 381 (DIDECEDSPCDQECINTPGGFHCECWVGYQSSGSKEEACE). One can recognise an EGF-like 4; calcium-binding domain in the interval 382–423 (DVDECTAAYSPCAQGCTNTDGSFYCSCKEGYIMSGEDSTQCE). The 39-residue stretch at 424-462 (DIDECLGNPCDTLCINTDGSFRCGCPAGFELAPNGVSCT) folds into the EGF-like 5; calcium-binding domain. Residues 469–517 (ELPARPPQKEDKGDGKESTVPLTEMPGSLNGSKDVSNRAQTTDLSIQSD) are disordered. The segment covering 475–485 (PQKEDKGDGKE) has biased composition (basic and acidic residues). Over residues 497–517 (LNGSKDVSNRAQTTDLSIQSD) the composition is skewed to polar residues. Residue Asn498 is glycosylated (N-linked (GlcNAc...) asparagine). A helical membrane pass occupies residues 572–592 (LLLFYILGTVVAISLLLALAL). The Cytoplasmic segment spans residues 593–643 (GLLIYLKRKAKKEEIKEKKAQNAADSYSWIPERAESRAPENQYSPTPGTDC). Positions 606-643 (EIKEKKAQNAADSYSWIPERAESRAPENQYSPTPGTDC) are disordered. Ser618 bears the Phosphoserine mark. Phosphotyrosine occurs at positions 619 and 635. A compositionally biased stretch (polar residues) spans 631-643 (PENQYSPTPGTDC).

Homodimer. Interacts with C1QBP; the association may represent a cell surface C1q receptor. Interacts with surfactant protein A/SFTPA1. Interacts with multimerin-2/MMRN2. Interacts with DAG1; this interaction plays an important role in endothelial cell migration. Interacts with CBL. Interacts with IGFBP7. Interacts with VEGFR2. In terms of processing, N- and O-glycosylated. Phosphorylated on Tyr-619 and Tyr-635 by SRC; these phosphorylations promote endothelial cell adhesion and migration. In terms of tissue distribution, widely expressed. Highly expressed in lung and heart. Expressed at lower level in brain, thymus, liver, spleen, intestine, kidney, adrenal gland, muscle and testis. Expressed on endothelial cells, platelets, undifferentiated monocytes and circulating natural killer cells.

The protein localises to the cell membrane. In terms of biological role, cell surface receptor that plays a role in various physiological processes including inflammation, phagocytosis, and cell adhesion. Plays a role in phagocytosis and enhances the uptake of apoptotic cells and immune complexes by acting as a receptor for defense collagens including surfactant protein A/SFTPA1, C1q, and mannose-binding lectin (MBL2). Plays a role in the regulation of endothelial cell function and adhesion by activating angiogenesis. Mechanistically, exerts its angiogenic function by associating with beta-dystroglycan, leading to SRC-dependent phosphorylation and subsequent recruitment of CBL. In turn, CBL provides a docking site for downstream signaling components, such as CRKL to enhance cell migration. Participates in angiogenesis also by acting as a receptor for the ECM pan-endothelial glycoprotein multimerin-2/MMRN2 and IGFBP7 ligands. Both ligands play a non-redundant role in CD93-mediated endothelial cell function. Acts as a key regulator of endothelial barrier function through modulating VEGFR2 function. This chain is Complement component C1q receptor (Cd93), found in Rattus norvegicus (Rat).